Consider the following 543-residue polypeptide: Probable E3 ubiquitin-protein ligase ARI9 (543 aa).

The disordered stretch occupies residues 1-26 (MDFSDDDMIDNKSGEENYSYGGGNES). Residues 124 to 332 (VNIQCGICFE…RHSGACNRFV (209 aa)) form a TRIAD supradomain region. Cys-128, Cys-131, Cys-145, His-147, Cys-150, Cys-153, Cys-173, Cys-178, Cys-217, Cys-222, Cys-240, Cys-242, Cys-247, Cys-250, His-255, Cys-260, Cys-287, and Cys-290 together coordinate Zn(2+). An RING-type 1 zinc finger spans residues 128–178 (CGICFESYTREEIARVSCGHPYCKTCWAGYITTKIEDGPGCLRVKCPEPSC). The IBR-type zinc-finger motif lies at 197–260 (EKYSRYILRS…SEDAHSPVDC (64 aa)). The segment at 287–317 (CPECKRPIEKNDGCNHMTCSAPCGHEFCWIC) adopts an RING-type 2; atypical zinc-finger fold. Cys-300 is an active-site residue. Zn(2+) is bound by residues Cys-305, Cys-309, Cys-314, Cys-317, His-324, and Cys-328.

The protein belongs to the RBR family. Ariadne subfamily. The cofactor is Zn(2+).

The enzyme catalyses [E2 ubiquitin-conjugating enzyme]-S-ubiquitinyl-L-cysteine + [acceptor protein]-L-lysine = [E2 ubiquitin-conjugating enzyme]-L-cysteine + [acceptor protein]-N(6)-ubiquitinyl-L-lysine.. Its pathway is protein modification; protein ubiquitination. Its function is as follows. Might act as an E3 ubiquitin-protein ligase, or as part of E3 complex, which accepts ubiquitin from specific E2 ubiquitin-conjugating enzymes and then transfers it to substrates. This chain is Probable E3 ubiquitin-protein ligase ARI9 (ARI9), found in Arabidopsis thaliana (Mouse-ear cress).